The primary structure comprises 2045 residues: Host cell factor 1 (2045 aa).

An N-acetylalanine modification is found at Ala-2. Phosphoserine is present on Ser-6. Kelch repeat units lie at residues 44–89 (LIVV…GFVC), 93–140 (RLLV…RLGH), 148–194 (KCYL…ITYG), 217–265 (KLVI…TIGN), and 266–313 (KMYV…LMDT). Residues Lys-105, Lys-163, and Lys-244 each participate in a glycyl lysine isopeptide (Lys-Gly) (interchain with G-Cter in ubiquitin) cross-link. A Glycyl lysine isopeptide (Lys-Gly) (interchain with G-Cter in SUMO2) cross-link involves residue Lys-282. Lys-288 is subject to N6-acetyllysine. Residue Lys-363 forms a Glycyl lysine isopeptide (Lys-Gly) (interchain with G-Cter in ubiquitin) linkage. The 92-residue stretch at 366–457 (PPARVQLVRA…VPQAATAPPS (92 aa)) folds into the Fibronectin type-III 1 domain. Positions 407 to 434 (ATATSPTPNPVPSVPANPPKSPAPAAAA) are disordered. Ser-411 bears the Phosphoserine mark. Positions 413–428 (TPNPVPSVPANPPKSP) are enriched in pro residues. The tract at residues 500-550 (LVTMRPASQAGKAPVTVTSLPASVRMVVPTQSAQGTVIGSNPQMSGMAALA) is required for interaction with OGT. An omega-N-methylarginine mark is found at Arg-504 and Arg-524. Phosphoserine occurs at positions 598, 666, and 669. Positions 610-722 (LKTAAAQVGT…KGPLPAGTIL (113 aa)) are interaction with SIN3A. The segment at 750-902 (ILGISSVSPS…SLAGAGAHST (153 aa)) is interaction with ZBTB17. N6-acetyllysine is present on Lys-813. An interaction with GABP2 region spans residues 813–912 (KIITAVPKIA…SASLATPITT (100 aa)). HCF repeat repeat units follow at residues 1010 to 1035 (TLVC…TVVA), 1072 to 1097 (VRVC…ATSN), and 1101 to 1126 (QHGC…AMSS). The HCF repeat 4; degenerate repeat unit spans residues 1157–1182 (VQGTVKPQCQTQQTNMTTTTMTVQAT). Phosphoserine is present on Ser-1204. An Asymmetric dimethylarginine modification is found at Arg-1216. Disordered stretches follow at residues 1219-1242 (LSGP…YTTN), 1302-1375 (PCET…TSTG), 1444-1475 (TVTS…STNI), and 1494-1525 (TTVT…QLPP). Position 1223 is a phosphoserine (Ser-1223). HCF repeat repeat units follow at residues 1295–1320 (TQVC…SNAG) and 1323–1348 (QRVC…ATSN). Positions 1308–1321 (TGTTNTATTSNAGS) are enriched in low complexity. An HCF repeat 7; degenerate repeat occupies 1358–1383 (QQPASGHPCETHQTTSTGTTMSVSVG). The stretch at 1423 to 1448 (QRVCSNPPCETHETGTTHTATTVTSN) is one HCF repeat 8 repeat. Thr-1500 bears the Phosphothreonine mark. The segment covering 1502–1511 (VPGPSVPPPE) has biased composition (pro residues). 3 positions are modified to phosphoserine: Ser-1506, Ser-1516, and Ser-1781. 2 Fibronectin type-III domains span residues 1808-1898 (PPPP…TCLP) and 1900-2016 (FPGA…TSKD). Residues Lys-1817 and Lys-1818 each participate in a glycyl lysine isopeptide (Lys-Gly) (interchain with G-Cter in ubiquitin) cross-link. At Ser-1848 the chain carries Phosphoserine. Residues 2004 to 2045 (ATQVRWLQETSKDSSGTKPASKRPMSSPEMKSAPKKSKADGQ) are disordered. Lys-2015 is modified (N6-acetyllysine). Residue Lys-2034 forms a Glycyl lysine isopeptide (Lys-Gly) (interchain with G-Cter in SUMO2) linkage.

Composed predominantly of six polypeptides ranging from 110 to 150 kDa and a minor 300 kDa polypeptide. The majority of N- and C-terminal cleavage products remain tightly, albeit non-covalently, associated. Interacts with POU2F1, CREB3, ZBTB17, EGR2, E2F4, CREBZF, SP1, GABP2, Sin3 HDAC complex (SIN3A, HDAC1, HDAC2, SUDS3), SAP30, SIN3B and FHL2. Component of a MLL1 complex, composed of at least the core components KMT2A/MLL1, ASH2L, HCFC1, WDR5 and RBBP5, as well as the facultative components BACC1, CHD8, DPY30, E2F6, HCFC2, HSP70, INO80C, KANSL1, LAS1L, MAX, MCRS1, MEN1, MGA, KAT8, PELP1, PHF20, PRP31, RING2, RUVBL1, RUVBL2, SENP3, TAF1, TAF4, TAF6, TAF7, TAF9 and TEX10. Component of a THAP1/THAP3-HCFC1-OGT complex that is required for the regulation of the transcriptional activity of RRM1. Interacts directly with THAP3 (via its HBM). Interacts (via the Kelch-repeat domain) with THAP1 (via the HBM); the interaction recruits HCHC1 to the RRM1. Interacts with THAP7 and THAP11 (via the HMB). Interacts directly with OGT; the interaction, which requires the HCFC1 cleavage site domain, glycosylates and promotes the proteolytic processing of HCFC1 and retains OGT in the nucleus. Component of the SET1 complex, at least composed of the catalytic subunit (SETD1A or SETD1B), WDR5, WDR82, RBBP5, ASH2L, CXXC1, HCFC1 and DPY30. Component of the NSL complex at least composed of MOF/KAT8, KANSL1, KANSL2, KANSL3, MCRS1, PHF20, OGT1/OGT, WDR5 and HCFC1. Component of a complex at least composed of ZNF335, HCFC1, CCAR2, EMSY, MKI67, RBBP5, ASH2L and WDR5; the complex is formed as a result of interactions between components of a nuclear receptor-mediated transcription complex and a histone methylation complex. Within the complex interacts with ZNF335. Interacts with TET2 and TET3. Interacts with HCFC1R1. Interacts with THAP11. Interacts (via Kelch domain) with KMT2E (via HBM motif). Interacts with E2F1. Accessory scaffold component of the polycomb repressive deubiquitinase (PR-DUB) complex, at least composed of BAP1, one of ASXL1, ASXL2 or (probably) ASXL3 and one of MBD5 or MBD6; the PR-DUB core associates with a number of accessory proteins, including FOXK1, FOXK2, KDM1B, HCFC1, YY1 and OGT. Interacts with YY1 (via Gly-rich region); the interaction is direct. Interacts with BAP1 (via HBM-like motif). Proteolytically cleaved at one or several PPCE--THET sites within the HCF repeats. Further cleavage of the primary N- and C-terminal chains results in a 'trimming' and accumulation of the smaller chains. Cleavage is promoted by O-glycosylation. In terms of processing, O-glycosylated. GlcNAcylation by OGT promotes proteolytic processing. Post-translationally, ubiquitinated. Lys-1817 and Lys-1818 are ubiquitinated both via 'Lys-48'- and 'Lys-63'-linked polyubiquitin chains. BAP1 mediated deubiquitination of 'Lys-48'-linked polyubiquitin chains; deubiquitination by BAP1 does not seem to stabilize the protein. As to expression, expressed in liver, pituitary gland, skeletal muscle, kidney, eye and brain (at protein level). Also observed at low level in heart, spleen and lung.

It localises to the nucleus. The protein localises to the cytoplasm. In terms of biological role, transcriptional coregulator. Serves as a scaffold protein, bridging interactions between transcription factors, including THAP11 and ZNF143, and transcriptional coregulators. Involved in control of the cell cycle. Also antagonizes transactivation by ZBTB17 and GABP2; represses ZBTB17 activation of the p15(INK4b) promoter and inhibits its ability to recruit p300. Coactivator for EGR2 and GABP2. Tethers the chromatin modifying Set1/Ash2 histone H3 'Lys-4' methyltransferase (H3K4me) and Sin3 histone deacetylase (HDAC) complexes (involved in the activation and repression of transcription respectively) together. As part of the NSL complex it may be involved in acetylation of nucleosomal histone H4 on several lysine residues. Recruits KMT2E to E2F1 responsive promoters promoting transcriptional activation and thereby facilitates G1 to S phase transition. Modulates expression of homeobox protein PDX1, perhaps acting in concert with transcription factor E2F1, thereby regulating pancreatic beta-cell growth and glucose-stimulated insulin secretion. May negatively modulate transcriptional activity of FOXO3. This Mus musculus (Mouse) protein is Host cell factor 1.